A 314-amino-acid chain; its full sequence is Acetyl-coenzyme A carboxylase carboxyl transferase subunit alpha (314 aa).

One can recognise a CoA carboxyltransferase C-terminal domain in the interval 32 to 289 (EIDMLEASLE…KSAFVAQLDS (258 aa)).

Belongs to the AccA family. As to quaternary structure, acetyl-CoA carboxylase is a heterohexamer composed of biotin carboxyl carrier protein (AccB), biotin carboxylase (AccC) and two subunits each of ACCase subunit alpha (AccA) and ACCase subunit beta (AccD).

It is found in the cytoplasm. It catalyses the reaction N(6)-carboxybiotinyl-L-lysyl-[protein] + acetyl-CoA = N(6)-biotinyl-L-lysyl-[protein] + malonyl-CoA. The protein operates within lipid metabolism; malonyl-CoA biosynthesis; malonyl-CoA from acetyl-CoA: step 1/1. Functionally, component of the acetyl coenzyme A carboxylase (ACC) complex. First, biotin carboxylase catalyzes the carboxylation of biotin on its carrier protein (BCCP) and then the CO(2) group is transferred by the carboxyltransferase to acetyl-CoA to form malonyl-CoA. The protein is Acetyl-coenzyme A carboxylase carboxyl transferase subunit alpha of Staphylococcus aureus (strain NCTC 8325 / PS 47).